Here is a 313-residue protein sequence, read N- to C-terminus: Methionyl-tRNA formyltransferase (313 aa).

109 to 112 (SLLP) serves as a coordination point for (6S)-5,6,7,8-tetrahydrofolate.

It belongs to the Fmt family.

It catalyses the reaction L-methionyl-tRNA(fMet) + (6R)-10-formyltetrahydrofolate = N-formyl-L-methionyl-tRNA(fMet) + (6S)-5,6,7,8-tetrahydrofolate + H(+). Attaches a formyl group to the free amino group of methionyl-tRNA(fMet). The formyl group appears to play a dual role in the initiator identity of N-formylmethionyl-tRNA by promoting its recognition by IF2 and preventing the misappropriation of this tRNA by the elongation apparatus. The chain is Methionyl-tRNA formyltransferase from Thermotoga neapolitana (strain ATCC 49049 / DSM 4359 / NBRC 107923 / NS-E).